We begin with the raw amino-acid sequence, 1900 residues long: Phosphatidylinositol 4-kinase STT4 (1900 aa).

Ser-459 bears the Phosphoserine mark. Positions 1345–1530 constitute a PIK helical domain; sequence KIEGADSNEL…KPTLDRIRER (186 aa). The pleckstrin homology (PH) domain conferring phosphoinositide binding specificity stretch occupies residues 1531-1648; that stretch reads MVSSFSQSHR…EKWQAAIFKV (118 aa). The PI3K/PI4K catalytic domain maps to 1617–1884; that stretch reads FMATFKIKKD…LIRKSYESIF (268 aa). The G-loop stretch occupies residues 1623-1629; the sequence is IKKDVKD. Residues 1751 to 1759 form a catalytic loop region; sequence QFKDRHNGN. The interval 1770–1794 is activation loop; the sequence is HIDFGFIFDIVPGGIKFEAVPFKLT.

Belongs to the PI3/PI4-kinase family. Type III PI4K subfamily.

It carries out the reaction a 1,2-diacyl-sn-glycero-3-phospho-(1D-myo-inositol) + ATP = a 1,2-diacyl-sn-glycero-3-phospho-(1D-myo-inositol 4-phosphate) + ADP + H(+). In terms of biological role, acts on phosphatidylinositol (PI) in the first committed step in the production of the second messenger inositol 1,4,5,-trisphosphate. STT4 functions in PKC1 protein kinase pathway. This chain is Phosphatidylinositol 4-kinase STT4 (STT4), found in Saccharomyces cerevisiae (strain ATCC 204508 / S288c) (Baker's yeast).